Reading from the N-terminus, the 79-residue chain is U-actitoxin-Oulsp1 (79 aa).

Residues 1–21 (MNTKLVVVFLLSAILFVSVTA) form the signal peptide. Positions 22–43 (SRPGKDLERDEAYETYDDENKR) are excised as a propeptide. In terms of domain architecture, ShKT spans 45–79 (CKDVFPAATCRHAKSVGNCSSEKYKRNCAITCGAC). Cystine bridges form between cysteine 45/cysteine 79, cysteine 54/cysteine 72, and cysteine 63/cysteine 76. The crucial for binding to potassium channels stretch occupies residues 67–68 (KY).

The protein belongs to the sea anemone type 1 potassium channel toxin family. Type 1b subfamily. In terms of processing, two similar peptides (OspTx2a-p1 and -p2) are obtained after synthesis and oxidative folding. They may differ by a D-Cys at position 76 (corresponding to OspTx2a-p2). Since C-terminal Cys residues are prone to racemization during solid-phase peptide synthesis, and if the presence of a D-amino acid is correct, it is probable that OspTx2a-p1 (L-Cys-76 form) corresponds to the native peptide.

The protein resides in the secreted. Functionally, toxin that weakly blocks the two voltage-gated potassium channels on Kv1.2/KCNA2 (IC(50)=1.8-2.5 uM) and Kv1.6/KCNA6 (IC(50)=5.6-6.2 uM). This is U-actitoxin-Oulsp1 from Oulactis sp. (Sea anemone).